The primary structure comprises 488 residues: Inositol 1,3,4-trisphosphate 5/6-kinase 4 (488 aa).

The 1D-myo-inositol 1,3,4-trisphosphate site is built by Lys-208 and Lys-224. The 243-residue stretch at 246–488 folds into the ATP-grasp domain; it reads NACAIVDPIR…RFDQHVQEKH (243 aa). 2 residues coordinate ATP: Arg-263 and Lys-315. Residues His-326 and Lys-360 each coordinate 1D-myo-inositol 1,3,4-trisphosphate. ATP contacts are provided by residues 349–360, Ser-375, and Ser-398; that span reads QEYVDHSSRIFK. The Mg(2+) site is built by Asp-439, Asp-453, and Asn-455. The 1D-myo-inositol 1,3,4-trisphosphate site is built by Asn-455 and Ser-459.

Belongs to the ITPK1 family. As to quaternary structure, monomer. Mg(2+) is required as a cofactor. In terms of tissue distribution, expressed in roots, leaf vasculature, cauline leaves, flower buds and siliques.

It carries out the reaction 1D-myo-inositol 1,3,4-trisphosphate + ATP = 1D-myo-inositol 1,3,4,5-tetrakisphosphate + ADP + H(+). It catalyses the reaction 1D-myo-inositol 1,3,4-trisphosphate + ATP = 1D-myo-inositol 1,3,4,6-tetrakisphosphate + ADP + H(+). Its function is as follows. Kinase that can phosphorylate the inositol polyphosphate Ins(1,3,4)P3 to form InsP4. Also phosphorylates a racemic mixture of Ins(1,4,6)P3 and Ins(3,4,6)P3 to form InsP4. Does not display inositol 3,4,5,6-tetrakisphosphate 1-kinase activity, but possesses inositol 1,4,5,6-tetrakisphosphate and inositol 1,3,4,5-tetrakisphosphate isomerase activity. Ins(1,3,4,6)P4 is an essential molecule in the hexakisphosphate (InsP6) pathway. This is Inositol 1,3,4-trisphosphate 5/6-kinase 4 (ITPK4) from Arabidopsis thaliana (Mouse-ear cress).